A 141-amino-acid chain; its full sequence is Organic hydroperoxide resistance protein-like 1 (141 aa).

Residues 1 to 20 (MAVNYETKATNTGGRNGHVQ) form a disordered region.

It belongs to the OsmC/Ohr family.

The protein is Organic hydroperoxide resistance protein-like 1 of Staphylococcus saprophyticus subsp. saprophyticus (strain ATCC 15305 / DSM 20229 / NCIMB 8711 / NCTC 7292 / S-41).